A 271-amino-acid chain; its full sequence is Small ribosomal subunit protein uS2 (271 aa).

It belongs to the universal ribosomal protein uS2 family.

The polypeptide is Small ribosomal subunit protein uS2 (Wolbachia pipientis subsp. Culex pipiens (strain wPip)).